The primary structure comprises 172 residues: Spermidine/spermine N(1)-acetyltransferase (172 aa).

One can recognise an N-acetyltransferase domain in the interval 3–172 (VKMKKCSRED…TDLIMAKTLI (170 aa)). Acetyl-CoA-binding positions include 96 to 98 (IYI), 105 to 109 (HGLGK), and 135 to 137 (NEN). Tyr-142 (proton donor) is an active-site residue. Residue Lys-144 participates in acetyl-CoA binding.

This sequence belongs to the acetyltransferase family. As to quaternary structure, monomer.

It catalyses the reaction an alkane-alpha,omega-diamine + acetyl-CoA = an N-acetylalkane-alpha,omega-diamine + CoA + H(+). Functionally, involved in the protection against polyamine toxicity by regulating their concentration. Could also be involved in the negative control of sporulation as well as production of degradative enzymes such as alpha-amylase, levansucrase and alkaline phosphatase. Catalyzes the transfer of an acetyl group from acetyl coenzyme A (AcCoA) to an acceptor substrate and releases both CoA and the acetylated product. It possesses N1-acetyltransferase activity toward polyamine substrates including spermidine, spermine, aminopropylcadaverine, norspermidine, homospermidine, N(8)-acetylspermidine, diaminopropane and agmatine. This Bacillus subtilis (strain 168) protein is Spermidine/spermine N(1)-acetyltransferase.